A 396-amino-acid chain; its full sequence is Multidrug resistance protein MdtL (396 aa).

At 1 to 4 (MFRY) the chain is on the cytoplasmic side. A helical transmembrane segment spans residues 5 to 25 (LLCCFGLVLMYPTGIDMYLVG). Residues 26 to 41 (LPQIANQLGATEAQLH) are Periplasmic-facing. Residues 42 to 62 (IAFSVYLAGMATTMLFAGSLA) form a helical membrane-spanning segment. At 63-64 (DR) the chain is on the cytoplasmic side. The chain crosses the membrane as a helical span at residues 65-85 (IGRKPITLFSALLFALASYFA). Over 86–92 (ARSQSSD) the chain is Periplasmic. Residues 93–113 (LFLVARFVQGVGAGCCYVVAF) traverse the membrane as a helical segment. Residues 114 to 131 (AILRDALDDKRRAKVLSM) lie on the Cytoplasmic side of the membrane. A helical transmembrane segment spans residues 132 to 152 (VNGVTCIIPVIAPVIGHLIML). Over 153-157 (RFPWP) the chain is Periplasmic. A helical membrane pass occupies residues 158-178 (SLFYTMAVMGLLVFGLCLFVL). Over 179–209 (RETYSKASFHSQTLPRVQTESFKQGFFISRV) the chain is Cytoplasmic. A helical transmembrane segment spans residues 210-230 (VITTLGVTTILSYVNVSPMLI). The Periplasmic portion of the chain corresponds to 231–242 (MGQMGFDRGQYS). Residues 243–263 (NTMAMTALVSMLASFSTPFLL) traverse the membrane as a helical segment. The Cytoplasmic segment spans residues 264–277 (NQFKEKSLILFSQT). Helical transmembrane passes span 278–298 (LFAAAALVFILTQLGWLGQLF) and 299–319 (NLLGFGLVCSGFAIGFGVTMS). At 320–333 (QALSPFVARAGVAS) the chain is on the cytoplasmic side. Residues 334–354 (SLLGIAQVCTSALYIWVMGLL) form a helical membrane-spanning segment. Residues 355-360 (EVSAIN) lie on the Periplasmic side of the membrane. Residues 361-381 (ILLAILAVGALISITLMLAVP) form a helical membrane-spanning segment. Residues 382-396 (KLSEMVANEQIPESA) lie on the Cytoplasmic side of the membrane.

The protein belongs to the major facilitator superfamily. DHA1 family. MdtL (TC 2.A.1.2.22) subfamily.

It is found in the cell inner membrane. This Shewanella sp. (strain ANA-3) protein is Multidrug resistance protein MdtL.